Reading from the N-terminus, the 61-residue chain is Disintegrin atroxatin (61 aa).

Residues 1–61 (NPCCDAATCK…ADCPRKGIYG (61 aa)) enclose the Disintegrin domain. Intrachain disulfides connect cysteine 3/cysteine 26, cysteine 9/cysteine 23, cysteine 17/cysteine 23, cysteine 22/cysteine 47, and cysteine 35/cysteine 54. The short motif at 39–41 (RGD) is the Cell attachment site element.

This sequence belongs to the venom metalloproteinase (M12B) family. P-II subfamily. P-IIa sub-subfamily. As to quaternary structure, monomer (disintegrin). Expressed by the venom gland.

Its subcellular location is the secreted. Inhibits fibrinogen interaction with platelets. Acts by binding to alpha-IIb/beta-3 (ITGA2B/ITGB3) on the platelet surface and inhibits aggregation induced by ADP, thrombin, platelet-activating factor and collagen. This is Disintegrin atroxatin from Crotalus atrox (Western diamondback rattlesnake).